We begin with the raw amino-acid sequence, 158 residues long: Regenerating islet-derived protein 4 (158 aa).

The signal sequence occupies residues 1–22 (MASRSMRLLLLLSCLAKTGVLG). A disulfide bridge connects residues Cys30 and Cys41. The region spanning 37–155 (HKSNCYGYFR…CNKRQHFLCK (119 aa)) is the C-type lectin domain. An N-linked (GlcNAc...) asparagine glycan is attached at Asn50. Intrachain disulfides connect Cys58/Cys154 and Cys129/Cys146. A carbohydrate is bound by residues 98 to 103 (DPQKRQ) and 135 to 137 (NNN).

As to expression, highly expressed in the gastrointestinal tract including the duodenum, jejunum, ileum, ileocecum, appendix, descending colon, pancreas and small intestine. Weakly expressed in normal colon and stomach. Strongly expressed in most colorectal tumors than in normal colon. Preferentially expressed in mucinous tumors and in some cases neuro-endocrine tumors. Expressed in mucus-secreting cells and enterocyte-like cells. In small intestine expressed at the basal perinuclear zone of goblet cells.

The protein resides in the secreted. Functionally, calcium-independent lectin displaying mannose-binding specificity and able to maintain carbohydrate recognition activity in an acidic environment. May be involved in inflammatory and metaplastic responses of the gastrointestinal epithelium. The chain is Regenerating islet-derived protein 4 (REG4) from Homo sapiens (Human).